Consider the following 232-residue polypeptide: Phospholipase A2 hemilipin (232 aa).

The signal sequence occupies residues methionine 1–serine 18. A propeptide spanning residues histidine 19–arginine 105 is cleaved from the precursor. Ca(2+) is bound by residues tryptophan 115, glycine 117, and glycine 119. 5 disulfides stabilise this stretch: cysteine 116–cysteine 137, cysteine 136–cysteine 175, cysteine 143–cysteine 168, cysteine 166–cysteine 206, and cysteine 211–cysteine 219. Asparagine 124 is a glycosylation site (N-linked (GlcNAc...) asparagine). Histidine 140 is a catalytic residue. A Ca(2+)-binding site is contributed by aspartate 141. An N-linked (GlcNAc...) asparagine glycan is attached at asparagine 157. Residues lysine 214–alanine 217 constitute a propeptide that is removed on maturation.

It belongs to the phospholipase A2 family. Group III subfamily. As to quaternary structure, heterodimer composed of a small subunit and a large subunit; disulfid-linked. Requires Ca(2+) as cofactor. In terms of tissue distribution, expressed by the venom gland.

It is found in the secreted. The catalysed reaction is a 1,2-diacyl-sn-glycero-3-phosphocholine + H2O = a 1-acyl-sn-glycero-3-phosphocholine + a fatty acid + H(+). Scorpion venom phospholipase A2 (PLA2) that shows high hydrolytic activities towards lecithin and acts as an effective blocker of all angiogenesis key steps in vivo and in vitro. It has no effect on apoptosis and does not display hemolytic, inflammatory or neurotoxic effects. PLA2 catalyzes the calcium-dependent hydrolysis of the 2-acyl groups in 3-sn-phosphoglycerides. The protein is Phospholipase A2 hemilipin of Hemiscorpius lepturus (Scorpion).